The chain runs to 569 residues: Pyrophosphate--fructose 6-phosphate 1-phosphotransferase subunit beta (569 aa).

Position 107 (glycine 107) interacts with diphosphate. Aspartate 201 lines the Mg(2+) pocket. Residues 229–231 (TID), 268–269 (KY), 276–278 (MGR), glutamate 337, and 442–445 (YEGR) each bind substrate. Aspartate 231 (proton acceptor) is an active-site residue.

Belongs to the phosphofructokinase type A (PFKA) family. PPi-dependent PFK group II subfamily. Clade 'Long' sub-subfamily. As to quaternary structure, tetramer of two alpha (regulatory) and two beta (catalytic) chains. Requires Mg(2+) as cofactor.

The protein resides in the cytoplasm. It carries out the reaction beta-D-fructose 6-phosphate + diphosphate = beta-D-fructose 1,6-bisphosphate + phosphate + H(+). The protein operates within carbohydrate degradation; glycolysis; D-glyceraldehyde 3-phosphate and glycerone phosphate from D-glucose: step 3/4. With respect to regulation, allosterically activated by fructose 2,6-bisphosphate. Catalytic subunit of pyrophosphate--fructose 6-phosphate 1-phosphotransferase. Catalyzes the phosphorylation of D-fructose 6-phosphate, the first committing step of glycolysis. Uses inorganic phosphate (PPi) as phosphoryl donor instead of ATP like common ATP-dependent phosphofructokinases (ATP-PFKs), which renders the reaction reversible, and can thus function both in glycolysis and gluconeogenesis. The chain is Pyrophosphate--fructose 6-phosphate 1-phosphotransferase subunit beta from Solanum tuberosum (Potato).